We begin with the raw amino-acid sequence, 170 residues long: 6,7-dimethyl-8-ribityllumazine synthase 2 (170 aa).

5-amino-6-(D-ribitylamino)uracil is bound by residues Trp25, 59 to 61 (AFE), and 83 to 85 (LVV). The active-site Proton donor is Arg91. Ser116 contacts 5-amino-6-(D-ribitylamino)uracil. His130 lines the (2S)-2-hydroxy-3-oxobutyl phosphate pocket.

Belongs to the DMRL synthase family. As to quaternary structure, forms an icosahedral capsid composed of 60 subunits, arranged as a dodecamer of pentamers.

It catalyses the reaction (2S)-2-hydroxy-3-oxobutyl phosphate + 5-amino-6-(D-ribitylamino)uracil = 6,7-dimethyl-8-(1-D-ribityl)lumazine + phosphate + 2 H2O + H(+). The protein operates within cofactor biosynthesis; riboflavin biosynthesis; riboflavin from 2-hydroxy-3-oxobutyl phosphate and 5-amino-6-(D-ribitylamino)uracil: step 1/2. Catalyzes the formation of 6,7-dimethyl-8-ribityllumazine by condensation of 5-amino-6-(D-ribitylamino)uracil with 3,4-dihydroxy-2-butanone 4-phosphate. This is the penultimate step in the biosynthesis of riboflavin. This chain is 6,7-dimethyl-8-ribityllumazine synthase 2, found in Pseudomonas syringae pv. tomato (strain ATCC BAA-871 / DC3000).